We begin with the raw amino-acid sequence, 356 residues long: Malate dehydrogenase, glyoxysomal (356 aa).

The transit peptide at 1 to 36 directs the protein to the glyoxysome; it reads MEDAAAAARRMERLASHLRPPASQMEESPLLRGSNC. NAD(+) contacts are provided by residues 51–57 and Asp77; that span reads GASGGIG. Residues Arg124 and Arg130 each contribute to the substrate site. Residues Asn137 and 160–162 contribute to the NAD(+) site; that span reads ISN. Positions 162 and 196 each coordinate substrate. His220 serves as the catalytic Proton acceptor. Residue Met271 participates in NAD(+) binding.

The protein belongs to the LDH/MDH superfamily. MDH type 1 family. As to quaternary structure, homodimer.

It localises to the glyoxysome. It carries out the reaction (S)-malate + NAD(+) = oxaloacetate + NADH + H(+). This chain is Malate dehydrogenase, glyoxysomal, found in Oryza sativa subsp. japonica (Rice).